The following is a 495-amino-acid chain: Ubiquinone biosynthesis monooxygenase COQ6, mitochondrial (495 aa).

It belongs to the UbiH/COQ6 family. Component of a multi-subunit COQ enzyme complex. Requires FAD as cofactor.

The protein resides in the mitochondrion inner membrane. It carries out the reaction a 4-hydroxy-3-(all-trans-polyprenyl)benzoate + 2 reduced [2Fe-2S]-[ferredoxin] + O2 + 2 H(+) = a 3,4-dihydroxy-5-(all-trans-polyprenyl)benzoate + 2 oxidized [2Fe-2S]-[ferredoxin] + H2O. It catalyses the reaction a 2-methoxy-6-(all-trans-polyprenyl)phenol + 2 reduced [2Fe-2S]-[ferredoxin] + O2 + 2 H(+) = a 2-methoxy-6-(all-trans-polyprenyl)benzene-1,4-diol + 2 oxidized [2Fe-2S]-[ferredoxin] + H2O. It functions in the pathway cofactor biosynthesis; ubiquinone biosynthesis. Its function is as follows. FAD-dependent monooxygenase required for two non-consecutive steps during ubiquinone biosynthesis. Required for the C5-ring hydroxylation during ubiquinone biosynthesis by catalyzing the hydroxylation of 4-hydroxy-3-(all-trans-polyprenyl)benzoic acid to 3,4-dihydroxy-5-(all-trans-polyprenyl)benzoic acid. Also acts downstream of coq4, for the C1-hydroxylation during ubiquinone biosynthesis by catalyzing the hydroxylation of 2-methoxy-6-(all-trans-polyprenyl)phenol to 2-methoxy-6-(all-trans-polyprenyl)benzene-1,4-diol. The electrons required for the hydroxylation reaction are funneled indirectly to coq6 from NADPH via a ferredoxin/ferredoxin reductase system. The polypeptide is Ubiquinone biosynthesis monooxygenase COQ6, mitochondrial (Dictyostelium discoideum (Social amoeba)).